A 175-amino-acid polypeptide reads, in one-letter code: Large ribosomal subunit protein uL15 (175 aa).

Positions 1–13 are enriched in basic and acidic residues; that stretch reads MTIKLNELRDNNG. 2 disordered regions span residues 1–44 and 150–175; these read MTIK…KARS and VELP…AKNA. Residues 23 to 37 are compositionally biased toward gly residues; sequence RGIGSGKGKTAGRGQ.

It belongs to the universal ribosomal protein uL15 family. As to quaternary structure, part of the 50S ribosomal subunit.

In terms of biological role, binds to the 23S rRNA. This is Large ribosomal subunit protein uL15 from Sphingopyxis alaskensis (strain DSM 13593 / LMG 18877 / RB2256) (Sphingomonas alaskensis).